Reading from the N-terminus, the 353-residue chain is Colistin resistance protein EmrA (353 aa).

A helical transmembrane segment spans residues 21–41; the sequence is WGVFSVLLLFLVAGILYYFFV. Residues 132 to 204 adopt a coiled-coil conformation; sequence VVAAQADLAR…QASRAQLLAD (73 aa).

The protein belongs to the membrane fusion protein (MFP) (TC 8.A.1) family.

The protein resides in the cell inner membrane. Functionally, probably part of an efflux pump system that contributes to adaptation to osmotic stress and resistance to colistin. The polypeptide is Colistin resistance protein EmrA (Acinetobacter baumannii (strain ATCC 17978 / DSM 105126 / CIP 53.77 / LMG 1025 / NCDC KC755 / 5377)).